Consider the following 584-residue polypeptide: DNA damage-binding protein 2 (584 aa).

The interval 1–87 is disordered; that stretch reads MGPTTRARFV…PVAAAARSGR (87 aa). Residues 8–20 show a composition bias toward basic residues; that stretch reads RFVHNRRRRRRRG. Acidic residues-rich tracts occupy residues 25–35 and 45–66; these read PDDDDEEEDQQ and DEGEEDAEEEGSGEVDDDDGEA. The CCHC-type zinc-finger motif lies at 122-140; it reads KPCFLCKMPGGHTTLTCPH. 7 WD repeats span residues 192-232, 236-278, 288-327, 333-373, 378-418, 438-481, and 484-523; these read FHQR…EKIT, VHSC…SLLN, STWRMIYGMDFNSDKGLLLVADSFGFLHLLDRRLKARIGD, KKGS…PNSA, AHGR…LESP, EWDP…LAEV, and PDITTISPVNKLHPRDDILASGSSRSIFIWKPKTESDATE. The short motif at 351-366 is the DWD box element; sequence LLSSGNDHYARIWDTR. The segment covering 517-532 has biased composition (basic and acidic residues); sequence TESDATEERNREKAKE. The tract at residues 517–584 is disordered; that stretch reads TESDATEERN…TIKGKGKSKV (68 aa). Basic residues predominate over residues 562 to 584; it reads KKKKKAKKTRFTHTIKGKGKSKV.

The protein belongs to the WD repeat DDB2/WDR76 family. In terms of assembly, component of the UV-DDB complex, which is composed of DDB1 and DDB2. As to expression, expressed in proliferating tissues such as shoot apical meristem (SAM), root tips and young leaves. Not detected in mature leaves.

Its subcellular location is the nucleus. In terms of biological role, required for DNA repair. Binds to DDB1 to form the UV-damaged DNA-binding protein complex (the UV-DDB complex). The UV-DDB complex may recognize UV-induced DNA damage and recruit proteins of the nucleotide excision repair pathway (the NER pathway) to initiate DNA repair. May function as the substrate recognition module for a DCX (DDB1-CUL4-X-box) E3 ubiquitin-protein ligase complex. The protein is DNA damage-binding protein 2 of Oryza sativa subsp. japonica (Rice).